The sequence spans 282 residues: Non-selective voltage-gated ion channel VDAC2 (282 aa).

Alanine 1 is modified (N-acetylalanine). The next 19 membrane-spanning stretches (beta stranded) occupy residues 25 to 34 (LVKLDVKTKS), 38 to 46 (VEFTTSGTS), 53 to 63 (VNGSLETKYKW), 68 to 75 (LTFTEKWN), 79 to 88 (TLGTEIAIED), 94 to 103 (LKLTFDTTFS), 110 to 119 (SGKVKAAYKQ), 122 to 129 (VNLGCDVD), 136 to 144 (AIHGSAVVG), 149 to 157 (LAGYQMTFD), 162 to 174 (KLTK…GYKT), 177 to 184 (FQLHTNVN), 188 to 197 (EFAGSIYQKV), 201 to 210 (METAVNLAWT), 217 to 226 (RFGIAAKYQL), 230 to 237 (AAISAKVN), 241 to 250 (LVGVGYTQTL), 253 to 262 (GVKLTLSALV), and 272 to 281 (HKLGLGLELE). NAD(+) is bound by residues 241-243 (LVG) and 259-263 (SALVD).

It belongs to the eukaryotic mitochondrial porin family. In terms of assembly, monomer, homodimer and higher order oligomers; formation of higher order structures is necessary for scramblase activity. In terms of tissue distribution, expressed in skeletal muscle and oocytes.

It localises to the mitochondrion outer membrane. Its subcellular location is the membrane. The enzyme catalyses chloride(in) = chloride(out). The catalysed reaction is K(+)(in) = K(+)(out). It carries out the reaction a 1,2-diacyl-sn-glycero-3-phospho-L-serine(in) = a 1,2-diacyl-sn-glycero-3-phospho-L-serine(out). It catalyses the reaction a 1,2-diacyl-sn-glycero-3-phosphocholine(in) = a 1,2-diacyl-sn-glycero-3-phosphocholine(out). The enzyme catalyses a 1,2-diacyl-sn-glycero-3-phospho-(1D-myo-inositol)(in) = a 1,2-diacyl-sn-glycero-3-phospho-(1D-myo-inositol)(out). Non-selective voltage-gated ion channel that mediates the transport of anions and cations through the mitochondrion outer membrane and plasma membrane. The channel adopts an open conformation at zero mV and a closed conformation at both positive and negative potentials. There are two populations of channels; the main that functions in a lower open-state conductance with lower ion selectivity, that switch, in a voltage-dependent manner, from the open to a low-conducting 'closed' state and the other that has a normal ion selectivity in the typical high conductance, 'open' state. In terms of biological role, catalyzes the scrambling of phospholipids across the outer mitochondrial membrane; the mechanism is unrelated to channel activity and is capable of translocating both anionic and zwitterionic phospholipids. The sequence is that of Non-selective voltage-gated ion channel VDAC2 from Xenopus laevis (African clawed frog).